A 597-amino-acid chain; its full sequence is Arginine--tRNA ligase (597 aa).

The 'HIGH' region signature appears at 125–135 (PNTNKPLHLGH).

This sequence belongs to the class-I aminoacyl-tRNA synthetase family. Monomer.

It is found in the cytoplasm. The catalysed reaction is tRNA(Arg) + L-arginine + ATP = L-arginyl-tRNA(Arg) + AMP + diphosphate. This Porphyromonas gingivalis (strain ATCC 33277 / DSM 20709 / CIP 103683 / JCM 12257 / NCTC 11834 / 2561) protein is Arginine--tRNA ligase.